A 1304-amino-acid chain; its full sequence is Neuronal cell adhesion molecule (1304 aa).

An N-terminal signal peptide occupies residues 1 to 24 (MQLKIMPKKKRLSAGRVPLILFLC). The Extracellular portion of the chain corresponds to 25 to 1167 (QMISALEVPL…ASRQVDIATQ (1143 aa)). 2 Ig-like domains span residues 46 to 134 (PTIT…AAVS) and 141 to 235 (PSRS…QPIS). 2 cysteine pairs are disulfide-bonded: cysteine 68–cysteine 123 and cysteine 167–cysteine 218. An N-linked (GlcNAc...) asparagine glycan is attached at asparagine 83. Residues asparagine 223, asparagine 245, asparagine 251, asparagine 276, and asparagine 314 are each glycosylated (N-linked (GlcNAc...) asparagine). 4 Ig-like domains span residues 267–356 (PPTF…ISVR), 361–448 (PYWI…AFVN), 454–541 (PRIL…VHLE), and 545–632 (PTWI…AVLS). Intrachain disulfides connect cysteine 292/cysteine 340 and cysteine 382/cysteine 432. 2 N-linked (GlcNAc...) asparagine glycosylation sites follow: asparagine 433 and asparagine 507. Disulfide bonds link cysteine 476–cysteine 525 and cysteine 567–cysteine 616. N-linked (GlcNAc...) asparagine glycosylation is found at asparagine 619, asparagine 716, and asparagine 802. Fibronectin type-III domains follow at residues 649-744 (PPFD…TKAS), 746-843 (PDKN…SGED), 848-950 (APGN…TPEG), 954-1051 (APSS…VDEA), and 1064-1156 (QAVN…TGPA). Residue asparagine 858 is glycosylated (N-linked (GlcNAc...) (complex) asparagine). Asparagine 993, asparagine 1009, asparagine 1019, asparagine 1072, asparagine 1083, and asparagine 1115 each carry an N-linked (GlcNAc...) asparagine glycan. The helical transmembrane segment at 1168–1190 (GWFIGLMCAVALLILILLIVCFI) threads the bilayer. The Cytoplasmic portion of the chain corresponds to 1191–1304 (RRNKGGKYPV…SPVNAMNSFV (114 aa)). Residues 1199-1219 (PVKEKEDAHADPEIQPMKEDD) show a composition bias toward basic and acidic residues. The disordered stretch occupies residues 1199 to 1304 (PVKEKEDAHA…SPVNAMNSFV (106 aa)). Threonine 1221 bears the Phosphothreonine mark. Position 1225 is a phosphotyrosine (tyrosine 1225). A Phosphoserine modification is found at serine 1226. Residues 1241-1250 (PSDRTVKKED) are compositionally biased toward basic and acidic residues. Residues serine 1251, serine 1254, serine 1271, serine 1290, serine 1291, and serine 1295 each carry the phosphoserine modification. Residues 1288–1304 (NESSEAPSPVNAMNSFV) are compositionally biased toward polar residues.

The protein belongs to the immunoglobulin superfamily. L1/neurofascin/NgCAM family. As to quaternary structure, constituent of a NFASC/NRCAM/ankyrin-G complex. Detected in a complex with CNTN1 and PTPRB. Interacts with GLDN/gliomedin. Interacts with MYOC. As to expression, detected in all the examined tissues. In the brain it was detected in the amygdala, caudate nucleus, corpus callosum, hippocampus, hypothalamus, substantia nigra, subthalamic nucleus and thalamus.

It is found in the cell membrane. Its subcellular location is the cell projection. The protein localises to the axon. It localises to the secreted. In terms of biological role, cell adhesion protein that is required for normal responses to cell-cell contacts in brain and in the peripheral nervous system. Plays a role in neurite outgrowth in response to contactin binding. Plays a role in mediating cell-cell contacts between Schwann cells and axons. Plays a role in the formation and maintenance of the nodes of Ranvier on myelinated axons. Nodes of Ranvier contain clustered sodium channels that are crucial for the saltatory propagation of action potentials along myelinated axons. During development, nodes of Ranvier are formed by the fusion of two heminodes. Required for normal clustering of sodium channels at heminodes; not required for the formation of mature nodes with normal sodium channel clusters. Required, together with GLDN, for maintaining NFASC and sodium channel clusters at mature nodes of Ranvier. This Homo sapiens (Human) protein is Neuronal cell adhesion molecule (NRCAM).